Consider the following 150-residue polypeptide: 3-dehydroquinate dehydratase (150 aa).

Catalysis depends on tyrosine 23, which acts as the Proton acceptor. Residues asparagine 75, histidine 81, and aspartate 88 each coordinate substrate. The active-site Proton donor is the histidine 101. Substrate-binding positions include 102–103 (LS) and arginine 112.

Belongs to the type-II 3-dehydroquinase family. As to quaternary structure, homododecamer.

The enzyme catalyses 3-dehydroquinate = 3-dehydroshikimate + H2O. Its pathway is metabolic intermediate biosynthesis; chorismate biosynthesis; chorismate from D-erythrose 4-phosphate and phosphoenolpyruvate: step 3/7. In terms of biological role, catalyzes a trans-dehydration via an enolate intermediate. This chain is 3-dehydroquinate dehydratase, found in Pseudomonas savastanoi pv. phaseolicola (strain 1448A / Race 6) (Pseudomonas syringae pv. phaseolicola (strain 1448A / Race 6)).